A 179-amino-acid polypeptide reads, in one-letter code: ATP synthase subunit delta (179 aa).

This sequence belongs to the ATPase delta chain family. As to quaternary structure, F-type ATPases have 2 components, F(1) - the catalytic core - and F(0) - the membrane proton channel. F(1) has five subunits: alpha(3), beta(3), gamma(1), delta(1), epsilon(1). F(0) has three main subunits: a(1), b(2) and c(10-14). The alpha and beta chains form an alternating ring which encloses part of the gamma chain. F(1) is attached to F(0) by a central stalk formed by the gamma and epsilon chains, while a peripheral stalk is formed by the delta and b chains.

Its subcellular location is the cell inner membrane. In terms of biological role, f(1)F(0) ATP synthase produces ATP from ADP in the presence of a proton or sodium gradient. F-type ATPases consist of two structural domains, F(1) containing the extramembraneous catalytic core and F(0) containing the membrane proton channel, linked together by a central stalk and a peripheral stalk. During catalysis, ATP synthesis in the catalytic domain of F(1) is coupled via a rotary mechanism of the central stalk subunits to proton translocation. Its function is as follows. This protein is part of the stalk that links CF(0) to CF(1). It either transmits conformational changes from CF(0) to CF(1) or is implicated in proton conduction. The polypeptide is ATP synthase subunit delta (Acidithiobacillus ferrooxidans (strain ATCC 23270 / DSM 14882 / CIP 104768 / NCIMB 8455) (Ferrobacillus ferrooxidans (strain ATCC 23270))).